The sequence spans 100 residues: Small ribosomal subunit protein uS14c (100 aa).

Belongs to the universal ribosomal protein uS14 family. In terms of assembly, part of the 30S ribosomal subunit.

It localises to the plastid. The protein localises to the chloroplast. Functionally, binds 16S rRNA, required for the assembly of 30S particles. This chain is Small ribosomal subunit protein uS14c, found in Oedogonium cardiacum (Filamentous green alga).